The following is an 82-amino-acid chain: Sec-independent protein translocase protein TatA (82 aa).

The helical transmembrane segment at 2 to 22 (GFGGISLWQLLIVLAIIVLLF) threads the bilayer. The segment at 43–82 (KAMSDEKNTDKEKPEQIQKSEESAPLDSAHTEKNKDNNKV) is disordered. Composition is skewed to basic and acidic residues over residues 44–64 (AMSD…KSEE) and 71–82 (AHTEKNKDNNKV).

The protein belongs to the TatA/E family. In terms of assembly, the Tat system comprises two distinct complexes: a TatABC complex, containing multiple copies of TatA, TatB and TatC subunits, and a separate TatA complex, containing only TatA subunits. Substrates initially bind to the TatABC complex, which probably triggers association of the separate TatA complex to form the active translocon.

It localises to the cell inner membrane. Its function is as follows. Part of the twin-arginine translocation (Tat) system that transports large folded proteins containing a characteristic twin-arginine motif in their signal peptide across membranes. TatA could form the protein-conducting channel of the Tat system. This chain is Sec-independent protein translocase protein TatA, found in Pseudoalteromonas translucida (strain TAC 125).